An 85-amino-acid chain; its full sequence is Small ribosomal subunit protein bS20 (85 aa).

Positions 1-22 are disordered; that stretch reads MPQIKSAIKRVKTQNATNKRNA. Residues 13–22 are compositionally biased toward polar residues; sequence TQNATNKRNA.

It belongs to the bacterial ribosomal protein bS20 family.

In terms of biological role, binds directly to 16S ribosomal RNA. This is Small ribosomal subunit protein bS20 from Lactobacillus acidophilus (strain ATCC 700396 / NCK56 / N2 / NCFM).